Reading from the N-terminus, the 200-residue chain is NADH-quinone oxidoreductase subunit C (200 aa).

Belongs to the complex I 30 kDa subunit family. NDH-1 is composed of 14 different subunits. Subunits NuoB, C, D, E, F, and G constitute the peripheral sector of the complex.

Its subcellular location is the cell inner membrane. The enzyme catalyses a quinone + NADH + 5 H(+)(in) = a quinol + NAD(+) + 4 H(+)(out). In terms of biological role, NDH-1 shuttles electrons from NADH, via FMN and iron-sulfur (Fe-S) centers, to quinones in the respiratory chain. The immediate electron acceptor for the enzyme in this species is believed to be ubiquinone. Couples the redox reaction to proton translocation (for every two electrons transferred, four hydrogen ions are translocated across the cytoplasmic membrane), and thus conserves the redox energy in a proton gradient. The polypeptide is NADH-quinone oxidoreductase subunit C (Ralstonia pickettii (strain 12J)).